Consider the following 1934-residue polypeptide: MGEKEIVDGCVAACHIAYACSEVAFTYPITPSSTISEVADSWMSRGRRNIFDQVVSVVEMQSEMGSAGALHGSLSVGCSTTTFTASQGLLLMIPNMYKIAGELWPCVFHVTARAIATSSLSIFGDHNDIMAARQTGWAFLGAMTVQEVMDLALVSHVSTFECSVPFVNFFDGFRTSHELQKIDMISYETIKKIFPYEKLKEFRERALNPTHPTLRGTATSSDVYFQLAEARNKYYESTPDIVQSVMDRLAKLIGRSYHLFDYYGHPDAEFLIVVMGSGGLTIEEMIDYLMEKSNEKVGMIKVRLFRPWSIDAFVKKIPKTTKRITVLERCKESGSLGEPLCLDVSTSIMRSELSSNNILVLGGRYGLASKEFTPGMALAVWENMISENPINNFSVGIDDDVTFKSLFVRQPRLDLLTSETKQCLFWGLGSDGTVSANKNAIKIIGESTDLQVQGYFAYDAKKAGGATMSHLRFGPKPIKSAYLLQRCDYVAVHHPSYVHKFDVLENIKQGGCFVLNCPWSTLEELNHELPSKIKHQIASRDVKFYVIDAQRIAQESNLGRRINNILMVVFFSLTNIIPLDLAIKLVKEAIKKTYGKKGDAVVNSNWKAVDLTLESLIQISYDKSQWISKDKCGEKSLPATAVETGNKDQEITKSTVLKQKPEHDVNQFVKDILGPVNALKGDELPVSMFEPTGTVPLGTTAYEKRGIAMSIPIVDMNKCTQCNYCSIVCPHAAIRPFLLDEAEFKNAPETMHIPKAKGGQEFSSYYYRIQVTPLDCTGCELCVHACPDDALHMEGLQKMEAVEKTHWDYLIGLPNKAEKFDRTTVKGSQFQQPLLEFSAACEGCGETPYVKLLTQLFGERMVIANATGCSSIWGASYPSVPYTKNQKGYGPAWGNSLFEDNAEYGLGMVVGYRQRRDRFRELVSNEILKDITEEEEFLKDDNASVQGRNEIITKYDHLKDYLRSWLKNIRNGEACQSLFEEISKLLEDNLINSNNFAQVLKKDRIELLEKLYDSRDLIPKISHWIVGGDGWAYDIGYAGLDHVLSFGEDVNIIILDTEVYSNTGGQASKSTPFGAIAKFAQSGNLRQKKDIGSIAMEYGSVYVASVALGANYSQTIKSLLEAEKYPGTSLIVAYSTCIEHGYTKYNLQQESVKLAVESGYWPLYRYNPELVRTEVVDNLTTIVSSGFTLDSKKVKVDIENFLKRENRFLQLIRSNPELASMAKDKLKAHSDKRFQKMKDMSENVTVTALKDQIKKLKDQLISIQNASKTGELAASGLINADLFIEQEMHVLYGTETGNSEEVAQYIQSQLVSRGYSSSSLNLDDLDIDEFLNPDKFSTVIIVTSTSGQGEFPGSSGILYEALLKKHLENQDDKFCSFMRFGIFGLGDSNYVFFNEAAKKWDKLLLDCGAVRIGAVGMGDDQSEEKYETELIEWLPDYLQLINAPEPKHDEKSEIPKATTFKVTILDSCRNDILNESTGTLCEKLDENNNIGNSHYKPIIPPNSVLLPVIENKRITNQDYDKDVRHIVFKLIGDGGDTPSLSYCLGDSLALYGQNPVNEAIKAIEMFGYNPYSLLRLSINEENEANNTNKVNQRYSSLFGYDITVLQLFVECLDLWGKPNRKFFQEFYRYCSNPEEKIQAKKWAQNEGKKLIEEFSSKTGTYLDVFKMFESARPTLAQLLDIVPFIKSRSYSIASCNKFVNGEKIELCVGIVDWKLESGEIRYGQCTGFLNRLPILDSESKIDSIPRLPSNIKASAFNLPFDYRSPVIMACMGTGIAPFRAFVQNKKYIRDVLKEEIGPVILYFGCRYYDNDYLYREELENYVKEGVITSLNIAFSRDPKGYKTSNCENIRYAQKMYVQHLMLENSQEIYENMIEKCGYFYLCGTKQVPIDIRKAIIQIIIKHSSTTEQVTSEEDANSILNSIQIMGRYNVEAWS.

2 4Fe-4S ferredoxin-type domains span residues serine 710–leucine 739 and tyrosine 767–leucine 796. [4Fe-4S] cluster contacts are provided by cysteine 719, cysteine 722, cysteine 725, cysteine 729, cysteine 776, cysteine 779, cysteine 782, and cysteine 786. Residues methionine 1288–leucine 1438 enclose the Flavodoxin-like domain. One can recognise an FAD-binding FR-type domain in the interval proline 1501–proline 1759. Residues tyrosine 1542 to glutamine 1553 and isoleucine 1685 to cysteine 1695 each bind FAD.

This sequence in the N-terminal section; belongs to the pyruvate:ferredoxin/flavodoxin oxidoreductase family. As to quaternary structure, homodimer. Requires FAD as cofactor. FMN serves as cofactor. Thiamine diphosphate is required as a cofactor.

It catalyses the reaction pyruvate + NADP(+) + CoA = acetyl-CoA + CO2 + NADPH. Its function is as follows. May have an important role in respiratory metabolism. Cryptosporidium have a relic mitochondrion with no function in energy metabolism so it is not known if PFOR has a function. The protein is Pyruvate dehydrogenase [NADP(+)] (PFOR) of Cryptosporidium parvum.